Consider the following 429-residue polypeptide: Histidine--tRNA ligase (429 aa).

This sequence belongs to the class-II aminoacyl-tRNA synthetase family. As to quaternary structure, homodimer.

The protein resides in the cytoplasm. It catalyses the reaction tRNA(His) + L-histidine + ATP = L-histidyl-tRNA(His) + AMP + diphosphate + H(+). The sequence is that of Histidine--tRNA ligase from Pseudomonas aeruginosa (strain UCBPP-PA14).